Here is a 494-residue protein sequence, read N- to C-terminus: Alpha-amylase-related protein (494 aa).

Positions 1-20 (MIKFALALTLCLAGASLSLA) are cleaved as a signal peptide. Position 21 is a pyrrolidone carboxylic acid (Q21). Cysteines 48 and 104 form a disulfide. Residues N118, Q169, and D178 each coordinate Ca(2+). C157 and C171 form a disulfide bridge. R206 contacts chloride. Residue D208 is the Nucleophile of the active site. A Ca(2+)-binding site is contributed by H212. E245 acts as the Proton donor in catalysis. N308 and R343 together coordinate chloride. 3 disulfides stabilise this stretch: C376/C382, C418/C441, and C448/C460.

This sequence belongs to the glycosyl hydrolase 13 family. As to quaternary structure, monomer. Ca(2+) is required as a cofactor. Chloride serves as cofactor.

It is found in the secreted. The catalysed reaction is Endohydrolysis of (1-&gt;4)-alpha-D-glucosidic linkages in polysaccharides containing three or more (1-&gt;4)-alpha-linked D-glucose units.. This is Alpha-amylase-related protein (Amyrel) from Drosophila jambulina (Fruit fly).